A 272-amino-acid chain; its full sequence is NH(3)-dependent NAD(+) synthetase (272 aa).

Position 45 to 52 (45 to 52 (GISGGQDS)) interacts with ATP. Mg(2+) is bound at residue Asp51. Residue Arg138 participates in deamido-NAD(+) binding. Thr158 is a binding site for ATP. Glu163 contacts Mg(2+). Positions 171 and 178 each coordinate deamido-NAD(+). Residues Lys187 and Thr209 each coordinate ATP. Residue 258-259 (HK) coordinates deamido-NAD(+).

It belongs to the NAD synthetase family. Homodimer.

It carries out the reaction deamido-NAD(+) + NH4(+) + ATP = AMP + diphosphate + NAD(+) + H(+). It participates in cofactor biosynthesis; NAD(+) biosynthesis; NAD(+) from deamido-NAD(+) (ammonia route): step 1/1. Functionally, catalyzes the ATP-dependent amidation of deamido-NAD to form NAD. Uses ammonia as a nitrogen source. This chain is NH(3)-dependent NAD(+) synthetase, found in Bacillus thuringiensis subsp. konkukian (strain 97-27).